We begin with the raw amino-acid sequence, 360 residues long: BLOC-1-related complex subunit 6 (360 aa).

Basic and acidic residues predominate over residues M1 to P10. The disordered stretch occupies residues M1–T201. Polar residues predominate over residues V23–K35. A Phosphothreonine modification is found at T41. The segment covering H71–S83 has biased composition (basic and acidic residues). The segment covering S89–S100 has biased composition (low complexity). A Phosphoserine modification is found at S130. Positions E144–A156 are enriched in acidic residues. Phosphoserine is present on S173. A compositionally biased stretch (gly residues) spans G179 to R198. T201 is subject to Phosphothreonine. At S204 the chain carries Phosphoserine.

The protein belongs to the BORCS6 family. Component of the BLOC-one-related complex (BORC) which is composed of BLOC1S1, BLOC1S2, BORCS5, BORCS6, BORCS7, BORCS8, KXD1 and SNAPIN.

The protein localises to the lysosome membrane. As part of the BORC complex may play a role in lysosomes movement and localization at the cell periphery. Associated with the cytosolic face of lysosomes, the BORC complex may recruit ARL8B and couple lysosomes to microtubule plus-end-directed kinesin motor. The polypeptide is BLOC-1-related complex subunit 6 (Rattus norvegicus (Rat)).